Here is a 122-residue protein sequence, read N- to C-terminus: Large ribosomal subunit protein uL14 (122 aa).

This sequence belongs to the universal ribosomal protein uL14 family. In terms of assembly, part of the 50S ribosomal subunit. Forms a cluster with proteins L3 and L19. In the 70S ribosome, L14 and L19 interact and together make contacts with the 16S rRNA in bridges B5 and B8.

Functionally, binds to 23S rRNA. Forms part of two intersubunit bridges in the 70S ribosome. The sequence is that of Large ribosomal subunit protein uL14 from Methylorubrum populi (strain ATCC BAA-705 / NCIMB 13946 / BJ001) (Methylobacterium populi).